The chain runs to 326 residues: ATP phosphoribosyltransferase regulatory subunit (326 aa).

It belongs to the class-II aminoacyl-tRNA synthetase family. HisZ subfamily. Heteromultimer composed of HisG and HisZ subunits.

The protein localises to the cytoplasm. Its pathway is amino-acid biosynthesis; L-histidine biosynthesis; L-histidine from 5-phospho-alpha-D-ribose 1-diphosphate: step 1/9. Its function is as follows. Required for the first step of histidine biosynthesis. May allow the feedback regulation of ATP phosphoribosyltransferase activity by histidine. The chain is ATP phosphoribosyltransferase regulatory subunit from Streptococcus thermophilus (strain ATCC BAA-491 / LMD-9).